We begin with the raw amino-acid sequence, 30 residues long: Cycloviolacin-O5 (30 aa).

Residues 1–30 (GTPCGESCVWIPCISSAVGCSCKNKVCYKN) constitute a cross-link (cyclopeptide (Gly-Asn)). Intrachain disulfides connect Cys-4–Cys-20, Cys-8–Cys-22, and Cys-13–Cys-27.

Post-translationally, this is a cyclic peptide.

In terms of biological role, probably participates in a plant defense mechanism. This Viola odorata (Sweet violet) protein is Cycloviolacin-O5.